The primary structure comprises 102 residues: Large ribosomal subunit protein bL21 (102 aa).

It belongs to the bacterial ribosomal protein bL21 family. In terms of assembly, part of the 50S ribosomal subunit. Contacts protein L20.

This protein binds to 23S rRNA in the presence of protein L20. This chain is Large ribosomal subunit protein bL21, found in Pseudarthrobacter chlorophenolicus (strain ATCC 700700 / DSM 12829 / CIP 107037 / JCM 12360 / KCTC 9906 / NCIMB 13794 / A6) (Arthrobacter chlorophenolicus).